Consider the following 85-residue polypeptide: Large ribosomal subunit protein bL27 (85 aa).

Belongs to the bacterial ribosomal protein bL27 family.

The sequence is that of Large ribosomal subunit protein bL27 from Campylobacter concisus (strain 13826).